The following is a 213-amino-acid chain: Glycerol-3-phosphate acyltransferase (213 aa).

Transmembrane regions (helical) follow at residues 2–22, 54–74, 80–100, 110–130, 143–163, and 165–185; these read ITIVLLILAYLLGSIPSGLWI, MATFVIDFFKGTLATLLPIMF, SPLIFGLLAVIGHTFPIFAGF, AGVVFGFAPVFCLYLAVVFFG, VTASIAAVIGVLLFPLFGFIL, and NYDPLFIAIILALASLIIIRH.

The protein belongs to the PlsY family. Probably interacts with PlsX.

The protein resides in the cell membrane. It catalyses the reaction an acyl phosphate + sn-glycerol 3-phosphate = a 1-acyl-sn-glycero-3-phosphate + phosphate. Its pathway is lipid metabolism; phospholipid metabolism. Functionally, catalyzes the transfer of an acyl group from acyl-phosphate (acyl-PO(4)) to glycerol-3-phosphate (G3P) to form lysophosphatidic acid (LPA). This enzyme utilizes acyl-phosphate as fatty acyl donor, but not acyl-CoA or acyl-ACP. The chain is Glycerol-3-phosphate acyltransferase from Streptococcus pneumoniae (strain Taiwan19F-14).